The sequence spans 603 residues: Aquaporin-2 (603 aa).

The helical transmembrane segment at 40 to 70 threads the bilayer; the sequence is SLKKYKYNLFFEFIGSFLFVFFISIYMLNSN. Basic and acidic residues-rich tracts occupy residues 135-149 and 156-190; these read NNKS…DDKI and EFEK…EDPK. The segment at 135–200 is disordered; that stretch reads NNKSKREVER…NISNKNENYD (66 aa). Polar residues predominate over residues 191 to 200; that stretch reads NISNKNENYD. The next 5 membrane-spanning stretches (helical) occupy residues 282-299, 321-346, 360-393, 442-471, and 509-542; these read HAIY…FILL, FALS…AHLY, IIKT…EENK, NKYI…VTNT, and ITKI…FLSL.

Belongs to the MIP/aquaporin (TC 1.A.8) family.

The protein resides in the endomembrane system. The enzyme catalyses H2O(in) = H2O(out). It catalyses the reaction glycerol(in) = glycerol(out). Required for sporozoite development in the mosquito vector. In Plasmodium falciparum (isolate NF54), this protein is Aquaporin-2.